Reading from the N-terminus, the 190-residue chain is Putative manganese efflux pump MntP (190 aa).

6 helical membrane passes run 3-23, 37-57, 72-88, 111-131, 138-158, and 164-184; these read FLQIFLLSIGVAADAFACSVV, LVLAGIFGVFQAAMPLIGWVI, HWIAFALLGVVGAKMIW, IILGLATSIDALAVGMGLAFV, VALSMGLITFALSLVGAWIGH, and FGKWATILGGIILIGIGANIV.

The protein belongs to the MntP (TC 9.B.29) family.

It localises to the cell membrane. Probably functions as a manganese efflux pump. The sequence is that of Putative manganese efflux pump MntP from Corynebacterium glutamicum (strain R).